Consider the following 752-residue polypeptide: Primary amine oxidase (752 aa).

The N-terminal stretch at M1–A27 is a signal peptide. Residues Y408–L419 and V490–Y495 contribute to the substrate site. The active-site Proton acceptor is the D410. The active-site Schiff-base intermediate with substrate; via topaquinone is the Y493. Position 493 is a 2',4',5'-topaquinone (Y493). 2 residues coordinate Cu cation: H551 and H553. The Ca(2+) site is built by D560, L561, D562, E600, Y694, D697, E699, and D705. D560 lines the Mn(2+) pocket. Residue D562 coordinates Mn(2+). D705 contacts Mn(2+). H716 contacts Cu cation.

The protein belongs to the copper/topaquinone oxidase family. Homodimer. Cu cation is required as a cofactor. Requires Ca(2+) as cofactor. The cofactor is L-topaquinone. It depends on Mn(2+) as a cofactor. In terms of processing, topaquinone (TPQ) is generated by copper-dependent autoxidation of a specific tyrosyl residue.

It localises to the periplasm. The catalysed reaction is a primary methyl amine + O2 + H2O = an aldehyde + H2O2 + NH4(+). Functionally, active on tyramine, tryptamine, beta-phenethylamine and dopamine. This Klebsiella michiganensis (strain ATCC 8724 / DSM 4798 / JCM 20051 / NBRC 3318 / NRRL B-199 / KCTC 1686 / BUCSAV 143 / CCM 1901) protein is Primary amine oxidase (maoA).